A 294-amino-acid chain; its full sequence is MASFRRFRLLSPLKPCVTFGRMLYTRIDKDGLTMLAGHLAYVSLLSLVPLITVIFALFAAFPMFAEISIKLKAFIFANFIPATGDIIQNYLEQFVANSNRMTVVGTCGLIVTALLLIYSVDSVLNIIWRSKIQRSLVFSFAVYWMVLTLGPILVGASMVISSYLLSLHWLAHARVDSMIDEILRVFPLLISWVSFWLLYSVVPTVRVPARDALIGALVAALLFELGKKGFAMYITLFPSYQLIYGVLAVIPILFLWVYWSWCIVLLGAEITVTLGEYRAERHHAKSVITQSPEM.

Helical transmembrane passes span 44–64, 67–87, 108–128, 136–156, 185–205, 212–232, and 246–266; these read LLSL…FPMF, ISIK…GDII, GLIV…NIIW, LVFS…LVGA, VFPL…VPTV, ALIG…GFAM, and VLAV…IVLL.

This sequence belongs to the UPF0761 family.

The protein localises to the cell inner membrane. The protein is UPF0761 membrane protein YPTS_0028 of Yersinia pseudotuberculosis serotype IB (strain PB1/+).